A 62-amino-acid chain; its full sequence is 6.7 kDa chloroplast outer envelope membrane protein (62 aa).

The Chloroplast intermembrane portion of the chain corresponds to 1–17 (MESVAKPATTKEGSAKQ). Residues 18-40 (AAIVVGVLALGWFAIQVAFIPLF) form a helical membrane-spanning segment. Topologically, residues 41 to 62 (NKVRGGGSDKKDDDVNAFTPDT) are cytoplasmic.

It is found in the plastid. Its subcellular location is the chloroplast outer membrane. The sequence is that of 6.7 kDa chloroplast outer envelope membrane protein from Spinacia oleracea (Spinach).